The following is a 296-amino-acid chain: GTPase Era (296 aa).

Residues 7 to 174 form the Era-type G domain; sequence HCGFVAIVGR…LDQVRPHLPE (168 aa). A G1 region spans residues 15 to 22; the sequence is GRPNVGKS. 15-22 is a GTP binding site; the sequence is GRPNVGKS. Positions 41 to 45 are G2; it reads QTTRH. The interval 62–65 is G3; that stretch reads DTPG. Residues 62–66 and 123–126 contribute to the GTP site; these read DTPGF and NKLD. Residues 123–126 form a G4 region; sequence NKLD. The interval 153 to 155 is G5; it reads VSA. One can recognise a KH type-2 domain in the interval 205 to 281; the sequence is LGEELPYEMN…FLQVWVKVKS (77 aa).

Belongs to the TRAFAC class TrmE-Era-EngA-EngB-Septin-like GTPase superfamily. Era GTPase family. In terms of assembly, monomer.

It localises to the cytoplasm. The protein resides in the cell inner membrane. In terms of biological role, an essential GTPase that binds both GDP and GTP, with rapid nucleotide exchange. Plays a role in 16S rRNA processing and 30S ribosomal subunit biogenesis and possibly also in cell cycle regulation and energy metabolism. This chain is GTPase Era, found in Chromobacterium violaceum (strain ATCC 12472 / DSM 30191 / JCM 1249 / CCUG 213 / NBRC 12614 / NCIMB 9131 / NCTC 9757 / MK).